The following is a 197-amino-acid chain: Thymidine kinase (197 aa).

ATP contacts are provided by residues 9–16 (SAMDAGKT) and 87–90 (DEIH). The active-site Proton acceptor is E88. Residues C145, C147, C187, and H190 each coordinate Zn(2+).

The protein belongs to the thymidine kinase family. As to quaternary structure, homotetramer.

The protein resides in the cytoplasm. It catalyses the reaction thymidine + ATP = dTMP + ADP + H(+). This Francisella tularensis subsp. tularensis (strain SCHU S4 / Schu 4) protein is Thymidine kinase.